Reading from the N-terminus, the 317-residue chain is MMNERVNKVALIGAGFVGSSYAFALINQGITDELVIIDVNREKAMGDVMDLNHGKAFAPHPVKTSYGTYEDCKDADIVCICAGANQKPGETRLELVEKNLAIFKSIVGEVMASGFDGIFLVATNPVDILTYATWTFSGLPKERVIGSGTTLDSARFRYMLSEYFGAAPQNVHAHIIGEHGDTELPVWSHANIGGVPVQQLLEKHAAYKQDELDQIVDDVKNAAYHIIEKKGATYYGVAMSLARITKAILRNENSILTVSTYLDGQYGVNDVFIGVPAVVNRNGIAGVTELELNETEQAQFSRSANVLKDILAPHFAE.

Residues Val-17, Asp-38, Lys-43, Tyr-69, and 83–84 each bind NAD(+); that span reads GA. Residues Gln-86 and Arg-92 each coordinate substrate. NAD(+) is bound by residues Ser-105, 122–124, and Ser-147; that span reads ATN. Residue 124 to 127 coordinates substrate; that stretch reads NPVD. 152 to 155 is a substrate binding site; it reads DSAR. Beta-D-fructose 1,6-bisphosphate-binding residues include Arg-157 and His-172. The active-site Proton acceptor is the His-179. Tyr-224 bears the Phosphotyrosine mark. Thr-233 is a substrate binding site.

This sequence belongs to the LDH/MDH superfamily. LDH family. As to quaternary structure, homotetramer.

It is found in the cytoplasm. It catalyses the reaction (S)-lactate + NAD(+) = pyruvate + NADH + H(+). It functions in the pathway fermentation; pyruvate fermentation to lactate; (S)-lactate from pyruvate: step 1/1. Allosterically activated by fructose 1,6-bisphosphate (FBP). In terms of biological role, catalyzes the conversion of lactate to pyruvate. The polypeptide is L-lactate dehydrogenase (Bacillus velezensis (strain DSM 23117 / BGSC 10A6 / LMG 26770 / FZB42) (Bacillus amyloliquefaciens subsp. plantarum)).